The chain runs to 625 residues: Probable potassium transport system protein Kup (625 aa).

Transmembrane regions (helical) follow at residues 10 to 30 (LAAL…TSPL), 50 to 70 (LLGV…LKYV), 102 to 122 (YFPL…DSVI), 135 to 155 (LGVA…AILV), 172 to 192 (FGPV…VNII), 214 to 234 (GFLA…AEAL), 251 to 271 (FLIA…LLLL), 284 to 304 (LGAW…IIAS), 340 to 360 (IYIP…VIGF), 369 to 389 (AYGI…FFVI), 397 to 417 (LILC…LFSA), and 422 to 442 (LFHG…LMLT).

Belongs to the HAK/KUP transporter (TC 2.A.72) family.

Its subcellular location is the cell inner membrane. It carries out the reaction K(+)(in) + H(+)(in) = K(+)(out) + H(+)(out). Functionally, transport of potassium into the cell. Likely operates as a K(+):H(+) symporter. In Herminiimonas arsenicoxydans, this protein is Probable potassium transport system protein Kup.